The chain runs to 298 residues: O-glycoside alpha-1,2-mannosyltransferase homolog 6 (298 aa).

Glu-220 serves as the catalytic Nucleophile.

It belongs to the glycosyltransferase 15 family.

The protein localises to the cytoplasm. It is found in the nucleus. In terms of biological role, probable mannosyltransferase involved in O-glycosylation of cell wall and secreted proteins. This is O-glycoside alpha-1,2-mannosyltransferase homolog 6 (omh6) from Schizosaccharomyces pombe (strain 972 / ATCC 24843) (Fission yeast).